We begin with the raw amino-acid sequence, 932 residues long: DNA mismatch repair protein MutS (932 aa).

Position 615-622 (615-622) interacts with ATP; sequence GPNMAGKS.

This sequence belongs to the DNA mismatch repair MutS family.

In terms of biological role, this protein is involved in the repair of mismatches in DNA. It is possible that it carries out the mismatch recognition step. This protein has a weak ATPase activity. In Clostridium botulinum (strain Loch Maree / Type A3), this protein is DNA mismatch repair protein MutS.